Reading from the N-terminus, the 247-residue chain is Homeobox-leucine zipper protein HOX15 (247 aa).

The tract at residues 1 to 44 is disordered; the sequence is MAQDDEDVGLALGLSLGSGGHRRQRESRDEAPSSAAASLLTLRL. The span at 32–44 shows a compositional bias: low complexity; that stretch reads PSSAAASLLTLRL. A DNA-binding region (homeobox) is located at residues 91–150; it reads NSRKKLRLSKEQSALLEDRFKEHSTLNPKQKVALAKQLNLRPRQVEVWFQNRRARTKLKQ. Residues 149-193 are leucine-zipper; that stretch reads KQTEVDCELLKRCCETLTEENRRLHRELQQLRALTHSTAAGFFMA. The segment at 221 to 247 is disordered; that stretch reads SPTAAADRTNKPTAPHLFSPFAKSAAC.

This sequence belongs to the HD-ZIP homeobox family. Class II subfamily. As to expression, expressed in seedlings, stems, leaf blades and panicles.

The protein localises to the nucleus. Its function is as follows. Probable transcription factor. This Oryza sativa subsp. japonica (Rice) protein is Homeobox-leucine zipper protein HOX15 (HOX15).